The following is a 355-amino-acid chain: Anhydro-N-acetylmuramic acid kinase (355 aa).

9–16 (GTSLDGVD) serves as a coordination point for ATP.

The protein belongs to the anhydro-N-acetylmuramic acid kinase family.

The catalysed reaction is 1,6-anhydro-N-acetyl-beta-muramate + ATP + H2O = N-acetyl-D-muramate 6-phosphate + ADP + H(+). It functions in the pathway amino-sugar metabolism; 1,6-anhydro-N-acetylmuramate degradation. The protein operates within cell wall biogenesis; peptidoglycan recycling. Functionally, catalyzes the specific phosphorylation of 1,6-anhydro-N-acetylmuramic acid (anhMurNAc) with the simultaneous cleavage of the 1,6-anhydro ring, generating MurNAc-6-P. Is required for the utilization of anhMurNAc either imported from the medium or derived from its own cell wall murein, and thus plays a role in cell wall recycling. This is Anhydro-N-acetylmuramic acid kinase from Paramagnetospirillum magneticum (strain ATCC 700264 / AMB-1) (Magnetospirillum magneticum).